Consider the following 107-residue polypeptide: Anti-adapter protein IraM (107 aa).

This sequence belongs to the IraM/RssC family.

Its subcellular location is the cytoplasm. Its function is as follows. Inhibits RpoS proteolysis by regulating RssB activity, thereby increasing the stability of the sigma stress factor RpoS during magnesium starvation. This Escherichia coli O7:K1 (strain IAI39 / ExPEC) protein is Anti-adapter protein IraM.